The chain runs to 236 residues: Thioredoxin-like 2-2, chloroplastic (236 aa).

A chloroplast-targeting transit peptide spans 1–82 (MAGVVRLTTT…LRRPKSQVVR (82 aa)). A Thioredoxin domain is found at 83-220 (VKVDENVAET…QLELGITLQT (138 aa)). Residues Cys-135 and Cys-138 each act as nucleophile in the active site. A disulfide bridge connects residues Cys-135 and Cys-138.

This sequence belongs to the thioredoxin family.

The protein localises to the plastid. It localises to the chloroplast. Thiol-disulfide oxidoreductase that may participate in various redox reactions. Possesses insulin disulfide bonds reducing activity. The chain is Thioredoxin-like 2-2, chloroplastic from Arabidopsis thaliana (Mouse-ear cress).